The primary structure comprises 484 residues: Aspartyl/glutamyl-tRNA(Asn/Gln) amidotransferase subunit B (484 aa).

It belongs to the GatB/GatE family. GatB subfamily. Heterotrimer of A, B and C subunits.

The enzyme catalyses L-glutamyl-tRNA(Gln) + L-glutamine + ATP + H2O = L-glutaminyl-tRNA(Gln) + L-glutamate + ADP + phosphate + H(+). The catalysed reaction is L-aspartyl-tRNA(Asn) + L-glutamine + ATP + H2O = L-asparaginyl-tRNA(Asn) + L-glutamate + ADP + phosphate + 2 H(+). Functionally, allows the formation of correctly charged Asn-tRNA(Asn) or Gln-tRNA(Gln) through the transamidation of misacylated Asp-tRNA(Asn) or Glu-tRNA(Gln) in organisms which lack either or both of asparaginyl-tRNA or glutaminyl-tRNA synthetases. The reaction takes place in the presence of glutamine and ATP through an activated phospho-Asp-tRNA(Asn) or phospho-Glu-tRNA(Gln). The protein is Aspartyl/glutamyl-tRNA(Asn/Gln) amidotransferase subunit B of Dechloromonas aromatica (strain RCB).